The chain runs to 651 residues: UvrABC system protein C (651 aa).

The GIY-YIG domain maps to 21-100 (TEPGCYLMRD…IKNQQPHFNV (80 aa)). The UVR domain maps to 210–245 (DELRQLLNQQMERYAERLDFESAARIRDQLQGIDQL).

Belongs to the UvrC family. As to quaternary structure, interacts with UvrB in an incision complex.

The protein localises to the cytoplasm. The UvrABC repair system catalyzes the recognition and processing of DNA lesions. UvrC both incises the 5' and 3' sides of the lesion. The N-terminal half is responsible for the 3' incision and the C-terminal half is responsible for the 5' incision. In Synechococcus sp. (strain CC9311), this protein is UvrABC system protein C.